A 1255-amino-acid polypeptide reads, in one-letter code: MTPGTQSPFFLLLLLTVLTVVTGSGHASSTPGGEKETSATQRSSVPSSTEKNAVSMTSSVLSSHSPGSGSSTTQGQDVTLAPATEPASGSAATWGQDVTSVPVTRPALGSTTPPAHDVTSAPDNKPAPGSTAPPAHGVTSAPDTRPAPGSTAPPAHGVTSAPDTRPAPGSTAPPAHGVTSAPDTRPAPGSTAPPAHGVTSAPDTRPAPGSTAPPAHGVTSAPDTRPAPGSTAPPAHGVTSAPDTRPAPGSTAPPAHGVTSAPDTRPAPGSTAPPAHGVTSAPDTRPAPGSTAPPAHGVTSAPDTRPAPGSTAPPAHGVTSAPDTRPAPGSTAPPAHGVTSAPDTRPAPGSTAPPAHGVTSAPDTRPAPGSTAPPAHGVTSAPDTRPAPGSTAPPAHGVTSAPDTRPAPGSTAPPAHGVTSAPDTRPAPGSTAPPAHGVTSAPDTRPAPGSTAPPAHGVTSAPDTRPAPGSTAPPAHGVTSAPDTRPAPGSTAPPAHGVTSAPDTRPAPGSTAPPAHGVTSAPDTRPAPGSTAPPAHGVTSAPDTRPAPGSTAPPAHGVTSAPDTRPAPGSTAPPAHGVTSAPDTRPAPGSTAPPAHGVTSAPDTRPAPGSTAPPAHGVTSAPDTRPAPGSTAPPAHGVTSAPDTRPAPGSTAPPAHGVTSAPDTRPAPGSTAPPAHGVTSAPDTRPAPGSTAPPAHGVTSAPDTRPAPGSTAPPAHGVTSAPDTRPAPGSTAPPAHGVTSAPDTRPAPGSTAPPAHGVTSAPDTRPAPGSTAPPAHGVTSAPDTRPAPGSTAPPAHGVTSAPDTRPAPGSTAPPAHGVTSAPDTRPAPGSTAPPAHGVTSAPDTRPAPGSTAPPAHGVTSAPDTRPAPGSTAPPAHGVTSAPDTRPAPGSTAPPAHGVTSAPDTRPAPGSTAPPAHGVTSAPDTRPAPGSTAPPAHGVTSAPDNRPALGSTAPPVHNVTSASGSASGSASTLVHNGTSARATTTPASKSTPFSIPSHHSDTPTTLASHSTKTDASSTHHSSVPPLTSSNHSTSPQLSTGVSFFFLSFHISNLQFNSSLEDPSTDYYQELQRDISEMFLQIYKQGGFLGLSNIKFRPGSVVVQLTLAFREGTINVHDVETQFNQYKTEAASRYNLTISDVSVSDVPFPFSAQSGAGVPGWGIALLVLVCVLVALAIVYLIALAVCQCRRKNYGQLDIFPARDTYHPMSEYPTYHTHGRYVPPSSTDRSPYEKVSAGNGGSSLSYTNPAVAATSANL.

Residues 1 to 23 form the signal peptide; it reads MTPGTQSPFFLLLLLTVLTVVTG. Residues 23–1033 form a disordered region; sequence GSGHASSTPG…PLTSSNHSTS (1011 aa). The Extracellular segment spans residues 24–1158; sequence SGHASSTPGG…SAQSGAGVPG (1135 aa). The segment covering 38–54 has biased composition (polar residues); the sequence is SATQRSSVPSSTEKNAV. Residues 55–75 show a composition bias toward low complexity; sequence SMTSSVLSSHSPGSGSSTTQG. Residues 61–80 form a 1; approximate repeat; that stretch reads LSSHSPGSGSSTTQGQDVTL. Residues 81–100 form a 2; approximate repeat; sequence APATEPASGSAATWGQDVTS. Residues 90 to 102 are compositionally biased toward polar residues; that stretch reads SAATWGQDVTSVP. 43 consecutive repeat copies span residues 101–120, 121–140, 141–160, 161–180, 181–200, 201–220, 221–240, 241–260, 261–280, 281–300, 301–320, 321–340, 341–360, 361–380, 381–400, 401–420, 421–440, 441–460, 461–480, 481–500, 501–520, 521–540, 541–560, 561–580, 581–600, 601–620, 621–640, 641–660, 661–680, 681–700, 701–720, 721–740, 741–760, 761–780, 781–800, 801–820, 821–840, 841–860, 861–880, 881–900, 901–920, 921–940, and 941–960. The segment at 126–965 is 42 X 20 AA approximate tandem repeats of P-A-P-G-S-T-A-P-P-A-H-G-V-T-S-A-P-D-T-R; that stretch reads PAPGSTAPPA…HNVTSASGSA (840 aa). O-linked (GalNAc...) threonine glycans are attached at residues threonine 131 and threonine 139. O-linked (GalNAc...) serine glycosylation occurs at serine 140. Threonine 144 carries O-linked (GalNAc...) threonine glycosylation. Asparagine 957 carries N-linked (GlcNAc...) asparagine glycosylation. A compositionally biased stretch (low complexity) spans 960–970; sequence SASGSASGSAS. The stretch at 961-980 is one 46; approximate repeat; it reads ASGSASGSASTLVHNGTSAR. Polar residues-rich tracts occupy residues 971-993 and 1001-1033; these read TLVHNGTSARATTTPASKSTPFS and TPTTLASHSTKTDASSTHHSSVPPLTSSNHSTS. A glycan (N-linked (GlcNAc...) asparagine) is linked at asparagine 975. A 47; approximate repeat occupies 981–1000; the sequence is ATTTPASKSTPFSIPSHHSD. The 48; approximate repeat unit spans residues 1001-1020; that stretch reads TPTTLASHSTKTDASSTHHS. N-linked (GlcNAc...) asparagine glycans are attached at residues asparagine 1029, asparagine 1055, and asparagine 1133. The SEA domain maps to 1039–1148; sequence GVSFFFLSFH…VSVSDVPFPF (110 aa). The chain crosses the membrane as a helical span at residues 1159–1181; sequence WGIALLVLVCVLVALAIVYLIAL. The Cytoplasmic segment spans residues 1182–1255; that stretch reads AVCQCRRKNY…PAVAATSANL (74 aa). Residues cysteine 1184 and cysteine 1186 are each lipidated (S-palmitoyl cysteine). Positions 1192 to 1228 are interaction with P53; that stretch reads GQLDIFPARDTYHPMSEYPTYHTHGRYVPPSSTDRSP. Tyrosine 1203 bears the Phosphotyrosine; by PDGFR mark. Positions 1203–1206 match the Interaction with GRB2 motif; it reads YHPM. Tyrosine 1212 bears the Phosphotyrosine mark. A disordered region spans residues 1214-1237; it reads THGRYVPPSSTDRSPYEKVSAGNG. Tyrosine 1218 bears the Phosphotyrosine; by PDGFR mark. Residues 1223–1230 are required for interaction with GSK3B; that stretch reads STDRSPYE. The residue at position 1224 (threonine 1224) is a Phosphothreonine; by PKC/PRKCD. Residue serine 1227 is modified to Phosphoserine; by GSK3-beta. Residue tyrosine 1229 is modified to Phosphotyrosine; by CSK, EGFR and SRC. An Interaction with SRC and ESR1 motif is present at residues 1229-1232; the sequence is YEKV. Positions 1233 to 1241 are required for interaction with beta- and gamma-catenins; the sequence is SAGNGGSSL. Phosphotyrosine is present on tyrosine 1243. Positions 1243-1246 match the Required for interaction with AP1S2 motif; the sequence is YTNP.

The alpha subunit forms a tight, non-covalent heterodimeric complex with the proteolytically-released beta-subunit. Interaction, via the tandem repeat region, with domain 1 of ICAM1 is implicated in cell migration and metastases. Isoform 1 binds directly the SH2 domain of GRB2, and forms a MUC1/GRB2/SOS1 complex involved in RAS signaling. The cytoplasmic tail (MUC1CT) interacts with several proteins such as SRC, CTNNB1 and ERBs. Interaction with the SH2 domain of CSK decreases interaction with GSK3B. Interacts with CTNNB1/beta-catenin and JUP/gamma-catenin and promotes cell adhesion. Interaction with JUP/gamma-catenin is induced by heregulin. Binds PRKCD, ERBB2, ERBB3 and ERBB4. Heregulin (HRG) stimulates the interaction with ERBB2 and, to a much lesser extent, the interaction with ERBB3 and ERBB4. Interacts with P53 in response to DNA damage. Interacts with KLF4. Interacts with estrogen receptor alpha/ESR1, through its DNA-binding domain, and stimulates its transcription activity. Binds ADAM17. Isoform ZD forms disulfide-linked oligomers. In terms of processing, highly glycosylated (N- and O-linked carbohydrates and sialic acid). O-glycosylated to a varying degree on serine and threonine residues within each tandem repeat, ranging from mono- to penta-glycosylation. The average density ranges from about 50% in human milk to over 90% in T47D breast cancer cells. Further sialylation occurs during recycling. Membrane-shed glycoproteins from kidney and breast cancer cells have preferentially sialyated core 1 structures, while secreted forms from the same tissues display mainly core 2 structures. The O-glycosylated content is overlapping in both these tissues with terminal fucose and galactose, 2- and 3-linked galactose, 3- and 3,6-linked GalNAc-ol and 4-linked GlcNAc predominating. Differentially O-glycosylated in breast carcinomas with 3,4-linked GlcNAc. N-glycosylation consists of high-mannose, acidic complex-type and hybrid glycans in the secreted form MUC1/SEC, and neutral complex-type in the transmembrane form, MUC1/TM. Proteolytic cleavage in the SEA domain occurs in the endoplasmic reticulum by an autoproteolytic mechanism and requires the full-length SEA domain as well as requiring a Ser, Thr or Cys residue at the P + 1 site. Cleavage at this site also occurs on isoform MUC1/X but not on isoform MUC1/Y. Ectodomain shedding is mediated by ADAM17. Post-translationally, dual palmitoylation on cysteine residues in the CQC motif is required for recycling from endosomes back to the plasma membrane. In terms of processing, phosphorylated on tyrosines and serine residues in the C-terminal. Phosphorylation on tyrosines in the C-terminal increases the nuclear location of MUC1 and beta-catenin. Phosphorylation by PKC delta induces binding of MUC1 to beta-catenin/CTNNB1 and thus decreases the formation of the beta-catenin/E-cadherin complex. Src-mediated phosphorylation inhibits interaction with GSK3B. Src- and EGFR-mediated phosphorylation on Tyr-1229 increases binding to beta-catenin/CTNNB1. GSK3B-mediated phosphorylation on Ser-1227 decreases this interaction but restores the formation of the beta-cadherin/E-cadherin complex. On T-cell receptor activation, phosphorylated by LCK. PDGFR-mediated phosphorylation increases nuclear colocalization of MUC1CT and CTNNB1. The N-terminal sequence has been shown to begin at position 24 or 28. As to expression, expressed on the apical surface of epithelial cells, especially of airway passages, breast and uterus. Also expressed in activated and unactivated T-cells. Overexpressed in epithelial tumors, such as breast or ovarian cancer and also in non-epithelial tumor cells. Isoform Y is expressed in tumor cells only.

The protein localises to the apical cell membrane. It is found in the secreted. Its subcellular location is the cell membrane. The protein resides in the cytoplasm. It localises to the nucleus. The alpha subunit has cell adhesive properties. Can act both as an adhesion and an anti-adhesion protein. May provide a protective layer on epithelial cells against bacterial and enzyme attack. Functionally, the beta subunit contains a C-terminal domain which is involved in cell signaling, through phosphorylations and protein-protein interactions. Modulates signaling in ERK, SRC and NF-kappa-B pathways. In activated T-cells, influences directly or indirectly the Ras/MAPK pathway. Promotes tumor progression. Regulates TP53-mediated transcription and determines cell fate in the genotoxic stress response. Binds, together with KLF4, the PE21 promoter element of TP53 and represses TP53 activity. In Homo sapiens (Human), this protein is Mucin-1 (MUC1).